The primary structure comprises 439 residues: Forkhead box protein J1-B (439 aa).

Positions 124–218 form a DNA-binding region, fork-head; the sequence is KPPYSYATLI…MNGAMKKRRL (95 aa).

This sequence belongs to the FOXJ1 family.

The protein resides in the nucleus. Functionally, key transcription factor required for motile ciliogenesis. Activates genes essential for motile cilia formation and function. The protein is Forkhead box protein J1-B (foxj1-b) of Xenopus laevis (African clawed frog).